Here is a 634-residue protein sequence, read N- to C-terminus: Probable potassium transport system protein Kup 2 (634 aa).

12 helical membrane-spanning segments follow: residues 15–35 (LTLG…LYAF), 55–75 (VLSL…VIFL), 101–121 (WVAV…DAII), 142–162 (GMSQ…LFMF), 173–193 (LFGP…LWHI), 208–228 (AVTF…AVFL), 252–272 (WLSF…ALAL), 303–323 (LVIL…TGAY), 351–371 (IYMP…VLGF), 381–401 (YGIA…LIAW), 408–428 (PVWT…FFGA), and 435–455 (EGGW…FTWL).

It belongs to the HAK/KUP transporter (TC 2.A.72) family.

It is found in the cell inner membrane. It catalyses the reaction K(+)(in) + H(+)(in) = K(+)(out) + H(+)(out). Transport of potassium into the cell. Likely operates as a K(+):H(+) symporter. The protein is Probable potassium transport system protein Kup 2 of Novosphingobium aromaticivorans (strain ATCC 700278 / DSM 12444 / CCUG 56034 / CIP 105152 / NBRC 16084 / F199).